The sequence spans 482 residues: Glutamate--tRNA ligase 2 (482 aa).

The 'HIGH' region motif lies at 16–26 (PSPTGYLHLGN). Positions 113, 115, 140, and 142 each coordinate Zn(2+). The 'KMSKS' region signature appears at 257 to 261 (PLSKR). Lys-260 provides a ligand contact to ATP.

It belongs to the class-I aminoacyl-tRNA synthetase family. Glutamate--tRNA ligase type 1 subfamily. Monomer. Zn(2+) serves as cofactor.

It localises to the cytoplasm. The enzyme catalyses tRNA(Glu) + L-glutamate + ATP = L-glutamyl-tRNA(Glu) + AMP + diphosphate. Catalyzes the attachment of glutamate to tRNA(Glu) in a two-step reaction: glutamate is first activated by ATP to form Glu-AMP and then transferred to the acceptor end of tRNA(Glu). This Acidithiobacillus ferrooxidans (strain ATCC 53993 / BNL-5-31) (Leptospirillum ferrooxidans (ATCC 53993)) protein is Glutamate--tRNA ligase 2.